A 601-amino-acid polypeptide reads, in one-letter code: Membrane protein insertase YidC (601 aa).

Residues 10-30 (ISISLVILVLFQVIASYVLPP) traverse the membrane as a helical segment. Positions 34-63 (APPHPATQTAQTQPVSGQPAPGVPAPSAVP) are disordered. The segment covering 39–53 (ATQTAQTQPVSGQPA) has biased composition (low complexity). Residues 54-63 (PGVPAPSAVP) are compositionally biased toward pro residues. A run of 4 helical transmembrane segments spans residues 382–404 (FGNMGVAIIVFTIGLKLVLFPLV), 455–475 (LPMLPQIPIFFSLYKVIFISI), 510–530 (ALSPFLHLGILPIIMGITMWG), and 549–569 (FMPVIFTFMLGRFAAGLVLYY).

It belongs to the OXA1/ALB3/YidC family. Type 1 subfamily. In terms of assembly, interacts with the Sec translocase complex via SecD. Specifically interacts with transmembrane segments of nascent integral membrane proteins during membrane integration.

The protein resides in the cell inner membrane. Functionally, required for the insertion and/or proper folding and/or complex formation of integral membrane proteins into the membrane. Involved in integration of membrane proteins that insert both dependently and independently of the Sec translocase complex, as well as at least some lipoproteins. Aids folding of multispanning membrane proteins. In Acidiphilium cryptum (strain JF-5), this protein is Membrane protein insertase YidC.